The following is a 1029-amino-acid chain: Toll-like receptor 9 (1029 aa).

The signal sequence occupies residues 1–24 (MGPYCAPHPLSLLVQAAALAAALA). The Extracellular segment spans residues 25–815 (QGTLPAFLPC…LCLDETLSLD (791 aa)). C34 and C44 form a disulfide bridge. 46-50 (WLFLK) provides a ligand contact to DNA. 26 LRR repeats span residues 61–84 (RANVTSLSLISNRIHHLHDSDFVH), 86–109 (SNLRVLNLKWNCPPAGLSPMHFPC), 121–146 (VPTLEELNLSYNGITTVPALPSSLVS), 149–165 (LSRTSILVLGPTHFTGL), 166–189 (HALRFLYMDGNCYYKNPCQQAVEV), 197–220 (LGNLTHLSLKYNNLTEVPRRLPPS), 222–241 (DTLLLSYNHIITLAPEDLAN), 242–267 (LTALRVLDVGGNCRRCDHARNPCREC), 282–305 (LSRLEGLVLKDSSLYKLEKDWFRG), 307–331 (GRLQVLDLSENFLYDYITKTTIFRN), 332–355 (LTQLRRLNLSFNYHKKVSFAHLQL), 362–385 (LVSLEKLDMHGIFFRSLTNTTLRP), 389–412 (LPKLQSLSLQLNFINQAELSIFGA), 414–439 (PSLLFVDLSDNRISGAARPVAALGEV), 469–492 (CNLNFTLDLSRNNLVTIQQEMFTR), 494–517 (SRLQCLRLSHNSISQAVNGSQFVP), 518–541 (LTRLRVLDLSYNKLDLYHGRSFTE), 543–570 (PQLEALDLSYNSQPFSMQGVGHNLSFVA), 572–596 (LPSLRYLSLAHNGIHSRVSQKLSSA), 598–620 (LRALDFSGNSLSQMWAEGDLYLC), 625–648 (LRNLVQLDLSKNHLHTLLPRHLDN), 650–673 (PKSLRQLRLRDNNLAFFNWSSLTV), 674–697 (LPQLEALDLAGNQLKALSNGSLPP), 699–721 (TRLQKLDVSSNSIGFVTPGFFVL), 722–745 (ANRLKELNLSANALKTVDPFWFGR), and 747–770 (TETLKILDVSANPLHCACGAAFVD). N63 is a glycosylation site (N-linked (GlcNAc...) asparagine). Residues 71 to 76 (SNRIHH) and 94 to 108 (KWNCPPAGLSPMHFP) contribute to the DNA site. C97 and C109 are joined by a disulfide. The N-linked (GlcNAc...) asparagine glycan is linked to N128. DNA-binding positions include Y131, R151, and 178-180 (YYK). An intrachain disulfide couples C177 to C183. N-linked (GlcNAc...) asparagine glycosylation is present at N199. Y207 is a binding site for DNA. N-linked (GlcNAc...) asparagine glycans are attached at residues N209 and N241. 2 disulfide bridges follow: C254–C267 and C257–C264. C257 is lipidated: S-palmitoyl cysteine. R261 provides a ligand contact to DNA. Residue C264 is the site of S-palmitoyl cysteine attachment. N-linked (GlcNAc...) asparagine glycosylation is found at N331, N339, and N380. A disulfide bridge connects residues C469 and C498. N-linked (GlcNAc...) asparagine glycans are attached at residues N472 and N511. Residue N565 is glycosylated (N-linked (GlcNAc...) asparagine). 2 N-linked (GlcNAc...) asparagine glycosylation sites follow: N667 and N692. N729 carries an N-linked (GlcNAc...) asparagine glycan. 2 disulfide bridges follow: C762-C788 and C764-C807. The chain crosses the membrane as a helical span at residues 816–836 (CFGFSLLMVALGLAVPMLHHL). The Cytoplasmic segment spans residues 837-1029 (CGWDLWYCFH…NFCRGPTTAE (193 aa)). The region spanning 864-1009 (LLYDAFVVFD…SFWANLGMAL (146 aa)) is the TIR domain.

This sequence belongs to the Toll-like receptor family. Monomer and homodimer. Exists as a monomer in the absence of unmethylated cytidine-phosphate-guanosine (CpG) ligand. Proteolytic processing of an insertion loop (Z-loop) is required for homodimerization upon binding to the unmethylated CpG ligand leading to its activation. Interacts with MYD88 via their respective TIR domains. Interacts with BTK. Interacts (via transmembrane domain) with UNC93B1. Interacts with CD300LH; the interaction may promote full activation of TLR9-triggered innate responses. Interacts with CNPY3 and HSP90B1; this interaction is required for proper folding in the endoplasmic reticulum. Interacts with SMPDL3B. Interacts with CD82; this interaction is essential for TLR9-dependent myddosome formation in response to CpG stimulation. Post-translationally, activated by proteolytic cleavage of the flexible loop between repeats LRR14 and LRR15 within the ectodomain. Cleavage requires UNC93B1. Proteolytically processed by first removing the majority of the ectodomain by either asparagine endopeptidase (AEP) or a cathepsin followed by a trimming event that is solely cathepsin mediated and required for optimal receptor signaling. In terms of processing, palmitoylated by ZDHHC3 in the Golgi regulates TLR9 trafficking from the Golgi to endosomes. Depalmitoylation by PPT1 controls the release of TLR9 from UNC93B1 in endosomes.

The protein localises to the endoplasmic reticulum membrane. It is found in the endosome. The protein resides in the lysosome. It localises to the cytoplasmic vesicle. Its subcellular location is the phagosome. Functionally, key component of innate and adaptive immunity. TLRs (Toll-like receptors) control host immune response against pathogens through recognition of molecular patterns specific to microorganisms. TLR9 is a nucleotide-sensing TLR which is activated by unmethylated cytidine-phosphate-guanosine (CpG) dinucleotides. Acts via MYD88 and TRAF6, leading to NF-kappa-B activation, cytokine secretion and the inflammatory response. Upon CpG stimulation, induces B-cell proliferation, activation, survival and antibody production. The polypeptide is Toll-like receptor 9 (TLR9) (Ovis aries (Sheep)).